Reading from the N-terminus, the 58-residue chain is Cecropin-B (58 aa).

The signal sequence occupies residues 1–21 (ILSFVFACLLALSAVSAAPEP).

This sequence belongs to the cecropin family.

It is found in the secreted. Cecropins have lytic and antibacterial activity against several Gram-positive and Gram-negative bacteria. The chain is Cecropin-B (CECB) from Spodoptera litura (Asian cotton leafworm).